The primary structure comprises 202 residues: Holliday junction branch migration complex subunit RuvA (202 aa).

Positions 1–64 are domain I; the sequence is MIGRLRGSLA…EDAHLLYGFY (64 aa). Residues 65–143 are domain II; that stretch reads EKRERELFRE…AWEALPGTFT (79 aa). The tract at residues 144–153 is flexible linker; sequence LVSNGPNQAE. Residues 154–202 form a domain III region; sequence PVASAESDAVSALISLGYKPQEASKAVSAIKEKDLSSADLIRRALKGMG.

This sequence belongs to the RuvA family. In terms of assembly, homotetramer. Forms an RuvA(8)-RuvB(12)-Holliday junction (HJ) complex. HJ DNA is sandwiched between 2 RuvA tetramers; dsDNA enters through RuvA and exits via RuvB. An RuvB hexamer assembles on each DNA strand where it exits the tetramer. Each RuvB hexamer is contacted by two RuvA subunits (via domain III) on 2 adjacent RuvB subunits; this complex drives branch migration. In the full resolvosome a probable DNA-RuvA(4)-RuvB(12)-RuvC(2) complex forms which resolves the HJ.

It localises to the cytoplasm. Functionally, the RuvA-RuvB-RuvC complex processes Holliday junction (HJ) DNA during genetic recombination and DNA repair, while the RuvA-RuvB complex plays an important role in the rescue of blocked DNA replication forks via replication fork reversal (RFR). RuvA specifically binds to HJ cruciform DNA, conferring on it an open structure. The RuvB hexamer acts as an ATP-dependent pump, pulling dsDNA into and through the RuvAB complex. HJ branch migration allows RuvC to scan DNA until it finds its consensus sequence, where it cleaves and resolves the cruciform DNA. The sequence is that of Holliday junction branch migration complex subunit RuvA from Pseudomonas syringae pv. syringae (strain B728a).